A 448-amino-acid chain; its full sequence is tRNA(Ile)-lysidine synthase (448 aa).

Residue 30–35 (GGGADS) participates in ATP binding.

The protein belongs to the tRNA(Ile)-lysidine synthase family.

It localises to the cytoplasm. It carries out the reaction cytidine(34) in tRNA(Ile2) + L-lysine + ATP = lysidine(34) in tRNA(Ile2) + AMP + diphosphate + H(+). In terms of biological role, ligates lysine onto the cytidine present at position 34 of the AUA codon-specific tRNA(Ile) that contains the anticodon CAU, in an ATP-dependent manner. Cytidine is converted to lysidine, thus changing the amino acid specificity of the tRNA from methionine to isoleucine. This Idiomarina loihiensis (strain ATCC BAA-735 / DSM 15497 / L2-TR) protein is tRNA(Ile)-lysidine synthase.